Here is a 230-residue protein sequence, read N- to C-terminus: 2,3-bisphosphoglycerate-dependent phosphoglycerate mutase (230 aa).

Substrate is bound by residues 8 to 15, 21 to 22, arginine 60, 87 to 90, lysine 98, and 114 to 115; these read RHGQSIWN, TG, ERHY, and RR. The active-site Tele-phosphohistidine intermediate is histidine 9. The active-site Proton donor/acceptor is the glutamate 87. Positions 117–143 are disordered; sequence YDTPPPALDAEDERHPRHDPRYAGLDP. Residues 128-137 show a composition bias toward basic and acidic residues; sequence DERHPRHDPR. 183 to 184 is a substrate binding site; that stretch reads GN.

The protein belongs to the phosphoglycerate mutase family. BPG-dependent PGAM subfamily. In terms of assembly, homodimer.

It catalyses the reaction (2R)-2-phosphoglycerate = (2R)-3-phosphoglycerate. The protein operates within carbohydrate degradation; glycolysis; pyruvate from D-glyceraldehyde 3-phosphate: step 3/5. Functionally, catalyzes the interconversion of 2-phosphoglycerate and 3-phosphoglycerate. In Halorhodospira halophila (strain DSM 244 / SL1) (Ectothiorhodospira halophila (strain DSM 244 / SL1)), this protein is 2,3-bisphosphoglycerate-dependent phosphoglycerate mutase.